The chain runs to 59 residues: MSLIVVRTHSFILFWFSCCWRVCFIQWIRKYSIPMADMGRRDSASALLDASENKNHLWG.

Belongs to the scoloptoxin-23 family. Contains 1 disulfide bond. Expressed by the venom gland.

Its subcellular location is the secreted. This chain is U-scoloptoxin(23)-Er2a, found in Ethmostigmus rubripes (Giant centipede).